Consider the following 190-residue polypeptide: Segregation and condensation protein B (190 aa).

Belongs to the ScpB family. Homodimer. Homodimerization may be required to stabilize the binding of ScpA to the Smc head domains. Component of a cohesin-like complex composed of ScpA, ScpB and the Smc homodimer, in which ScpA and ScpB bind to the head domain of Smc. The presence of the three proteins is required for the association of the complex with DNA.

It localises to the cytoplasm. Participates in chromosomal partition during cell division. May act via the formation of a condensin-like complex containing Smc and ScpA that pull DNA away from mid-cell into both cell halves. The protein is Segregation and condensation protein B of Alkaliphilus metalliredigens (strain QYMF).